A 241-amino-acid chain; its full sequence is Uridylate kinase (241 aa).

12 to 15 contributes to the ATP binding site; it reads KLSG. UMP is bound at residue glycine 54. 2 residues coordinate ATP: glycine 55 and arginine 59. Residues aspartate 74 and 135 to 142 each bind UMP; that span reads TGNPFFTT. Positions 162, 168, and 171 each coordinate ATP.

Belongs to the UMP kinase family. Homohexamer.

The protein localises to the cytoplasm. It carries out the reaction UMP + ATP = UDP + ADP. The protein operates within pyrimidine metabolism; CTP biosynthesis via de novo pathway; UDP from UMP (UMPK route): step 1/1. Inhibited by UTP. Catalyzes the reversible phosphorylation of UMP to UDP. The chain is Uridylate kinase from Magnetococcus marinus (strain ATCC BAA-1437 / JCM 17883 / MC-1).